We begin with the raw amino-acid sequence, 34 residues long: Photosystem I reaction center subunit XII (34 aa).

A helical transmembrane segment spans residues 9 to 29 (LIALSLIVVVHAGVLALRLGI).

Belongs to the PsaM family.

It is found in the cellular thylakoid membrane. The polypeptide is Photosystem I reaction center subunit XII (Prochlorococcus marinus (strain MIT 9312)).